Reading from the N-terminus, the 278-residue chain is Shikimate dehydrogenase (NADP(+)) (278 aa).

Residues 19 to 21 and T66 contribute to the shikimate site; that span reads SLS. K70 serves as the catalytic Proton acceptor. D82 serves as a coordination point for NADP(+). Residues N91 and D107 each coordinate shikimate. Residues 133 to 137, 157 to 162, and I222 each bind NADP(+); these read GSGGA and NRTRAR. Y224 contributes to the shikimate binding site. G245 contributes to the NADP(+) binding site.

Belongs to the shikimate dehydrogenase family. Homodimer.

The catalysed reaction is shikimate + NADP(+) = 3-dehydroshikimate + NADPH + H(+). The protein operates within metabolic intermediate biosynthesis; chorismate biosynthesis; chorismate from D-erythrose 4-phosphate and phosphoenolpyruvate: step 4/7. In terms of biological role, involved in the biosynthesis of the chorismate, which leads to the biosynthesis of aromatic amino acids. Catalyzes the reversible NADPH linked reduction of 3-dehydroshikimate (DHSA) to yield shikimate (SA). In Jannaschia sp. (strain CCS1), this protein is Shikimate dehydrogenase (NADP(+)).